Reading from the N-terminus, the 675-residue chain is Polyamine deacetylase HDAC10 (675 aa).

Asp22 lines the substrate pocket. The Substrate specificity motif lies at 23 to 26; that stretch reads PACE. Asp94 is a substrate binding site. His137 functions as the Proton donor/acceptor in the catalytic mechanism. Zn(2+)-binding residues include Asp174, His176, and Asp267. Residue Tyr307 coordinates substrate. Residues 362–399 form a disordered region; that stretch reads LAQSETNPKRPRLDATNGGPKESSEPASESNPKKTAQD.

Belongs to the histone deacetylase family. HD type 2 subfamily.

The protein resides in the cytoplasm. It is found in the nucleus. It carries out the reaction N(8)-acetylspermidine + H2O = spermidine + acetate. The catalysed reaction is N-acetylputrescine + H2O = putrescine + acetate. It catalyses the reaction N-acetylcadaverine + H2O = cadaverine + acetate. Polyamine deacetylase (PDAC), which acts preferentially on N(8)-acetylspermidine, and also on acetylcadaverine and acetylputrescine. Exhibits attenuated catalytic activity toward N(1),N(8)-diacetylspermidine and very low activity, if any, toward N(1)-acetylspermidine. Has a very weak lysine deacetylase, if any. The polypeptide is Polyamine deacetylase HDAC10 (hdac10) (Danio rerio (Zebrafish)).